The primary structure comprises 93 residues: Molybdopterin synthase sulfur carrier subunit (93 aa).

G93 bears the 1-thioglycine; alternate mark. G93 bears the Glycyl adenylate; alternate mark.

The protein belongs to the MoaD family. MOCS2A subfamily. As to quaternary structure, heterotetramer; composed of 2 small (MOCS2A) and 2 large (MOCS2B) subunits. C-terminal thiocarboxylation occurs in 2 steps, it is first acyl-adenylated (-COAMP) via the hesA/moeB/thiF part of UBA4, then thiocarboxylated (-COSH) via the rhodanese domain of UBA4.

The protein localises to the cytoplasm. Its pathway is cofactor biosynthesis; molybdopterin biosynthesis. Its function is as follows. Acts as a sulfur carrier required for molybdopterin biosynthesis. Component of the molybdopterin synthase complex that catalyzes the conversion of precursor Z into molybdopterin by mediating the incorporation of 2 sulfur atoms into precursor Z to generate a dithiolene group. In the complex, serves as sulfur donor by being thiocarboxylated (-COSH) at its C-terminus by UBA4. After interaction with MOCS2B, the sulfur is then transferred to precursor Z to form molybdopterin. The protein is Molybdopterin synthase sulfur carrier subunit of Mycosarcoma maydis (Corn smut fungus).